A 467-amino-acid chain; its full sequence is Pancreatic lipase-related protein 3 (467 aa).

An N-terminal signal peptide occupies residues 1-17 (MLGIWIVAFLFFGTSRG). An intrachain disulfide couples cysteine 21 to cysteine 27. The N-linked (GlcNAc...) asparagine glycan is linked to asparagine 74. Residues cysteine 107 and cysteine 118 are joined by a disulfide bond. An N-linked (GlcNAc...) asparagine glycan is attached at asparagine 125. Serine 168 functions as the Nucleophile in the catalytic mechanism. Catalysis depends on aspartate 191, which acts as the Charge relay system. Residues cysteine 252 and cysteine 277 are joined by a disulfide bond. The active-site Charge relay system is histidine 279. 3 cysteine pairs are disulfide-bonded: cysteine 301-cysteine 312, cysteine 315-cysteine 320, and cysteine 451-cysteine 467. The PLAT domain occupies 355–467 (WRHKLSVKLS…PNILQNLKPC (113 aa)).

This sequence belongs to the AB hydrolase superfamily. Lipase family. In terms of tissue distribution, overexpressed in hepatocellular carcinoma.

The protein localises to the secreted. The catalysed reaction is a triacylglycerol + H2O = a diacylglycerol + a fatty acid + H(+). The protein is Pancreatic lipase-related protein 3 (PNLIPRP3) of Homo sapiens (Human).